A 354-amino-acid polypeptide reads, in one-letter code: Probable L-ascorbate-6-phosphate lactonase UlaG (354 aa).

The protein belongs to the UlaG family. Requires a divalent metal cation as cofactor.

The protein resides in the cytoplasm. The enzyme catalyses L-ascorbate 6-phosphate + H2O = 3-dehydro-L-gulonate 6-phosphate. It participates in cofactor degradation; L-ascorbate degradation; D-xylulose 5-phosphate from L-ascorbate: step 1/4. In terms of biological role, probably catalyzes the hydrolysis of L-ascorbate-6-P into 3-keto-L-gulonate-6-P. Is essential for L-ascorbate utilization under anaerobic conditions. The polypeptide is Probable L-ascorbate-6-phosphate lactonase UlaG (Escherichia coli O45:K1 (strain S88 / ExPEC)).